A 184-amino-acid polypeptide reads, in one-letter code: Putative tetraheme cytochrome-c type (184 aa).

Topologically, residues 1–14 (MSKHAASSAKRFSL) are cytoplasmic. Residues 15–35 (LALGLMFVGGIVFVWAVDFGI) form a helical membrane-spanning segment. At 36–184 (KTTNTLEFCT…HEPTEPDDAS (149 aa)) the chain is on the periplasmic side. Cysteine 44, cysteine 47, methionine 50, cysteine 73, cysteine 76, and histidine 77 together coordinate heme. Substrate is bound by residues lysine 89 and aspartate 95. Heme-binding residues include aspartate 95, cysteine 133, cysteine 136, histidine 137, cysteine 165, cysteine 168, histidine 169, and histidine 174.

This sequence belongs to the NapC/NirT/NrfH family. Post-translationally, binds 4 heme groups per subunit.

It localises to the cell inner membrane. In Allochromatium vinosum (strain ATCC 17899 / DSM 180 / NBRC 103801 / NCIMB 10441 / D) (Chromatium vinosum), this protein is Putative tetraheme cytochrome-c type.